We begin with the raw amino-acid sequence, 303 residues long: Oxygen-dependent coproporphyrinogen-III oxidase (303 aa).

Ser-93 contributes to the substrate binding site. Positions 97 and 107 each coordinate a divalent metal cation. His-107 acts as the Proton donor in catalysis. 109 to 111 (NVR) contacts substrate. A divalent metal cation is bound by residues His-149 and His-179. The segment at 244–279 (YVEFNLVFDRGTLFGLQSGGRTESILLSMPPMAQWR) is important for dimerization. Position 262–264 (262–264 (GGR)) interacts with substrate.

It belongs to the aerobic coproporphyrinogen-III oxidase family. In terms of assembly, homodimer. A divalent metal cation is required as a cofactor.

The protein resides in the cytoplasm. The catalysed reaction is coproporphyrinogen III + O2 + 2 H(+) = protoporphyrinogen IX + 2 CO2 + 2 H2O. It functions in the pathway porphyrin-containing compound metabolism; protoporphyrin-IX biosynthesis; protoporphyrinogen-IX from coproporphyrinogen-III (O2 route): step 1/1. Functionally, involved in the heme biosynthesis. Catalyzes the aerobic oxidative decarboxylation of propionate groups of rings A and B of coproporphyrinogen-III to yield the vinyl groups in protoporphyrinogen-IX. In Bordetella petrii (strain ATCC BAA-461 / DSM 12804 / CCUG 43448), this protein is Oxygen-dependent coproporphyrinogen-III oxidase.